Consider the following 457-residue polypeptide: LSVCFLILFHGCLASRQEWQQQDECQIDRLDALEPDNRVEYEAGTVEAWDPNHEQFRCAGVALVRHTIQPNGLLLPQYSNAPQLIYVVQGEGMTGISYPGCPETYQAPQQGRQQGQSGRFQDRHQKIRRFRRGDIIAIPAGVAHWCYNEGNSPVVTVTLLDVSNSQNQLDRTPRKFHLAGNPKDVFQQQQQHQSRGRNLFSGFDTELLAEAFQVDERLIKQLKSEDNRGGIVKVKDDELRVIRPSRSQSERGSESEEESEDEKRRWGQRDNGIEETICTMRLKENINDPARADIYTPEVGRLTTLNSLNLPILKWLQLSVEKGVLYKNALVLPHWNLNSHSIIYGCKGKGQVQVVDNFGNRVFDGEVREGQMLVVPQNFAVVKRAREERFEWISFKTNDRAMTSPLAGRTSVLGGMPEEVLANAFQISREDARKIKFNNQQTTLTSGESSHHMRDDA.

The first 14 residues, 1–14, serve as a signal peptide directing secretion; the sequence is LSVCFLILFHGCLA. Positions 15–29 are igE-binding; that stretch reads SRQEWQQQDECQIDR. Cystine bridges form between cysteine 25-cysteine 58 and cysteine 101-cysteine 278. 2 conformational epitope; mouse monoclonal antibody (mAb) 2B5-binding regions span residues 29–37 and 31–48; these read RLDALEPDN and DALE…TVEA. Residues 30–220 enclose the Cupin type-1 1 domain; it reads LDALEPDNRV…AFQVDERLIK (191 aa). Binds goat polyclonal antibodies (pAbs) regions lie at residues 32-45 and 55-86; these read ALEP…EAGT and QFRC…QLIY. The interval 34–57 is mouse monoclonal antibody (mAb) 2B5-binding; sequence EPDNRVEYEAGTVEAWDPNHEQFR. The mouse monoclonal antibody (mAb) 4H9-binding stretch occupies residues 41–55; it reads YEAGTVEAWDPNHEQ. An igE-binding region spans residues 105 to 119; sequence YQAPQQGRQQGQSGR. Positions 215–239 are binds goat polyclonal antibodies (pAbs); sequence DERLIKQLKSEDNRGGIVKVKDDEL. The interval 233 to 252 is CD4(+) T cell-reactive epitope; that stretch reads KVKDDELRVIRPSRSQSERG. A disordered region spans residues 243-270; sequence RPSRSQSERGSESEEESEDEKRRWGQRD. Over residues 261–270 the composition is skewed to basic and acidic residues; sequence DEKRRWGQRD. Positions 265–289 are linear epitope; mouse monoclonal antibody (mAb) 1F5-binding; it reads RWGQRDNGIEETICTMRLKENINDP. The short motif at 271 to 276 is the NGXEET; peptidase recognition motif element; that stretch reads NGIEET. Residues 284–433 form the Cupin type-1 2 domain; the sequence is ENINDPARAD…AFQISREDAR (150 aa). 5 CD4(+) T cell-reactive epitope regions span residues 289 to 308, 297 to 316, 321 to 340, 329 to 348, and 377 to 396; these read PARA…LNSL, PEVG…LKWL, EKGV…LNSH, ALVL…GCKG, and QNFA…ISFK. A binds goat polyclonal antibodies (pAbs), but buried in the 3D-structure model region spans residues 395–416; it reads FKTNDRAMTSPLAGRTSVLGGM.

Belongs to the 11S seed storage protein (globulins) family. As to quaternary structure, homotrimer. Hexamer. Each subunit is composed of an acidic and a basic chain derived from a single precursor and linked by a disulfide bond. Proteolytically processed from a single precursor to produce an acidic and a basic chain that are linked by a disulfide bond. Not glycosylated. Expressed in seed (at protein level). Expressed in the juice of the cashew apple (at protein level).

Its function is as follows. Seed storage protein. The protein is 11S globulin seed storage protein Ana o 2.0101 of Anacardium occidentale (Cashew).